The sequence spans 71 residues: Bowman-Birk type trypsin inhibitor (71 aa).

6 cysteine pairs are disulfide-bonded: Cys-10–Cys-67, Cys-11–Cys-27, Cys-14–Cys-63, Cys-17–Cys-25, Cys-35–Cys-42, and Cys-39–Cys-55.

This sequence belongs to the Bowman-Birk serine protease inhibitor family.

In terms of biological role, inhibits trypsin but not chymotrypsin. The chain is Bowman-Birk type trypsin inhibitor from Triticum aestivum (Wheat).